The sequence spans 455 residues: Adenylyltransferase and sulfurtransferase MOCS3 (455 aa).

ATP is bound by residues glycine 90, aspartate 111, 118 to 122, lysine 135, and 179 to 180; these read SNLAR and DN. The interaction with NFS1 stretch occupies residues 156–236; sequence AQALTPATAL…QPPPAETVTN (81 aa). Zn(2+) is bound by residues cysteine 220 and cysteine 223. Cysteine 237 functions as the Glycyl thioester intermediate; for adenylyltransferase activity in the catalytic mechanism. Positions 295 and 298 each coordinate Zn(2+). The cysteines at positions 314 and 322 are disulfide-linked. In terms of domain architecture, Rhodanese spans 345–453; the sequence is SGSPHLLLDV…WAAKVDGTFP (109 aa). The active-site Cysteine persulfide intermediate; for sulfurtransferase activity is the cysteine 410. Position 410 is a cysteine persulfide (cysteine 410).

This sequence in the N-terminal section; belongs to the HesA/MoeB/ThiF family. UBA4 subfamily. In terms of assembly, interacts with NFS1. Zn(2+) serves as cofactor.

It localises to the cytoplasm. The protein resides in the cytosol. The enzyme catalyses [molybdopterin-synthase sulfur-carrier protein]-C-terminal Gly-Gly + ATP + H(+) = [molybdopterin-synthase sulfur-carrier protein]-C-terminal Gly-Gly-AMP + diphosphate. It catalyses the reaction [molybdopterin-synthase sulfur-carrier protein]-C-terminal Gly-Gly-AMP + S-sulfanyl-L-cysteinyl-[cysteine desulfurase] + AH2 = [molybdopterin-synthase sulfur-carrier protein]-C-terminal-Gly-aminoethanethioate + L-cysteinyl-[cysteine desulfurase] + A + AMP + 2 H(+). Its pathway is tRNA modification; 5-methoxycarbonylmethyl-2-thiouridine-tRNA biosynthesis. It functions in the pathway cofactor biosynthesis; molybdopterin biosynthesis. In terms of biological role, plays a central role in 2-thiolation of mcm(5)S(2)U at tRNA wobble positions of cytosolic tRNA(Lys), tRNA(Glu) and tRNA(Gln). Also essential during biosynthesis of the molybdenum cofactor. Acts by mediating the C-terminal thiocarboxylation of sulfur carriers URM1 and MOCS2A. Its N-terminus first activates URM1 and MOCS2A as acyl-adenylates (-COAMP), then the persulfide sulfur on the catalytic cysteine is transferred to URM1 and MOCS2A to form thiocarboxylation (-COSH) of their C-terminus. The reaction probably involves hydrogen sulfide that is generated from the persulfide intermediate and that acts as a nucleophile towards URM1 and MOCS2A. Subsequently, a transient disulfide bond is formed. Does not use thiosulfate as sulfur donor; NFS1 acting as a sulfur donor for thiocarboxylation reactions. This Sus scrofa (Pig) protein is Adenylyltransferase and sulfurtransferase MOCS3.